The primary structure comprises 231 residues: DNA mismatch repair protein MutH (231 aa).

Belongs to the MutH family.

It localises to the cytoplasm. Functionally, sequence-specific endonuclease that cleaves unmethylated GATC sequences. It is involved in DNA mismatch repair. The sequence is that of DNA mismatch repair protein MutH from Shewanella woodyi (strain ATCC 51908 / MS32).